The primary structure comprises 605 residues: Tegument protein UL47 homolog (605 aa).

The interval 1-75 is disordered; the sequence is MATDNARPRS…DPWKLEPAND (75 aa). Over residues 8–17 the composition is skewed to basic residues; sequence PRSRSLRRKS. Positions 54-69 are enriched in basic and acidic residues; that stretch reads GADRDPGTRRGIDPWK.

Belongs to the alphaherpesvirinae HHV-1 UL47 family. Interacts with US3 kinase. Interacts with UL31 and UL34; these interactions seem important for efficient virion nuclear egress. Interacts with UL41/VHS. Post-translationally, phosphorylated by US3. This phosphorylation is required for proper nuclear localization.

The protein localises to the virion tegument. It is found in the host nucleus. It localises to the host cytoplasm. Its function is as follows. Tegument protein that can bind to various RNA transcripts. Plays a role in the attenuation of selective viral and cellular mRNA degradation by modulating the activity of host shutoff RNase UL41/VHS. Also plays a role in the primary envelopment of virions in the perinuclear space, probably by interacting with two nuclear egress proteins UL31 and UL34. The chain is Tegument protein UL47 homolog (sORF1) from Amazona oratrix (yellow-headed parrot).